Reading from the N-terminus, the 329-residue chain is Terpene synthase 7 (329 aa).

The short motif at 99–104 (DDLYLE) is the DDxx(x)D/E motif element. The NDxxSxxxD/E motif signature appears at 230–238 (NDIHSFNKE).

The protein belongs to the terpene synthase family.

In terms of biological role, terpene synthase that converts its substrate farnesyl diphosphate (FPP) into 6 yet unidentified sesquiterpenes. This Dictyostelium purpureum (Slime mold) protein is Terpene synthase 7.